Here is a 312-residue protein sequence, read N- to C-terminus: Ribonuclease Z (312 aa).

Zn(2+) contacts are provided by H61, H63, D65, H66, H148, D216, and H275. D65 (proton acceptor) is an active-site residue.

It belongs to the RNase Z family. Homodimer. The cofactor is Zn(2+).

It catalyses the reaction Endonucleolytic cleavage of RNA, removing extra 3' nucleotides from tRNA precursor, generating 3' termini of tRNAs. A 3'-hydroxy group is left at the tRNA terminus and a 5'-phosphoryl group is left at the trailer molecule.. In terms of biological role, zinc phosphodiesterase, which displays some tRNA 3'-processing endonuclease activity. Probably involved in tRNA maturation, by removing a 3'-trailer from precursor tRNA. The chain is Ribonuclease Z from Clostridium tetani (strain Massachusetts / E88).